Reading from the N-terminus, the 275-residue chain is Calcyphosin (275 aa).

The segment at 59 to 87 (PGTTQLTQGPAGRTLGQTQASCPEPRPSM) is disordered. 4 consecutive EF-hand domains span residues 107–142 (SGIQGLARFFRQLDRDGSRSLDADEFRQGLAKLGLV), 143–178 (LDQAEAEGVCRKWDRNGSGTLDLEEFLRALRPPMSQ), 179–214 (AREAVIAAAFAKLDRSGDGVVTVDDLRGVYSGRAHP), and 222–258 (TEDEVLRRFLDNFDSSEKDGQVTLAEFQDYYSGVSAS). Residues D120, D122, S124, S126, E131, D156, N158, S160, T162, E167, D192, S194, D196, and D203 each coordinate Ca(2+). S126 carries the post-translational modification Phosphoserine; by PKA.

In terms of assembly, monomer. Does not form oligomers in the presence of calcium.

The protein localises to the cytoplasm. Its function is as follows. Calcium-binding protein. May play a role in cellular signaling events (Potential). In Homo sapiens (Human), this protein is Calcyphosin.